Here is a 278-residue protein sequence, read N- to C-terminus: Pantothenate synthetase (278 aa).

30-37 is a binding site for ATP; sequence MGFLHEGH. Histidine 37 serves as the catalytic Proton donor. (R)-pantoate is bound at residue glutamine 61. Glutamine 61 contacts beta-alanine. Position 147–150 (147–150) interacts with ATP; the sequence is GQKD. Glutamine 153 contributes to the (R)-pantoate binding site. ATP is bound by residues valine 176 and 184 to 187; that span reads LSSR.

It belongs to the pantothenate synthetase family. As to quaternary structure, homodimer.

Its subcellular location is the cytoplasm. The catalysed reaction is (R)-pantoate + beta-alanine + ATP = (R)-pantothenate + AMP + diphosphate + H(+). It participates in cofactor biosynthesis; (R)-pantothenate biosynthesis; (R)-pantothenate from (R)-pantoate and beta-alanine: step 1/1. Functionally, catalyzes the condensation of pantoate with beta-alanine in an ATP-dependent reaction via a pantoyl-adenylate intermediate. This is Pantothenate synthetase from Thermosipho africanus (strain TCF52B).